Reading from the N-terminus, the 192-residue chain is Small ribosomal subunit protein uS5 (192 aa).

The S5 DRBM domain occupies 20-83 (FVDKLVHINR…EAAKRGLIRV (64 aa)). The interval 162–192 (SVAARRGLKVSALQARRRDADPADTSEAAVA) is disordered.

This sequence belongs to the universal ribosomal protein uS5 family. As to quaternary structure, part of the 30S ribosomal subunit. Contacts proteins S4 and S8.

With S4 and S12 plays an important role in translational accuracy. Functionally, located at the back of the 30S subunit body where it stabilizes the conformation of the head with respect to the body. The sequence is that of Small ribosomal subunit protein uS5 from Methylorubrum extorquens (strain CM4 / NCIMB 13688) (Methylobacterium extorquens).